A 124-amino-acid polypeptide reads, in one-letter code: Seripauperin-15 (124 aa).

Residues Met1–Ala20 form the signal peptide.

Belongs to the SRP1/TIP1 family. Seripauperin subfamily.

The sequence is that of Seripauperin-15 (PAU15) from Saccharomyces cerevisiae (strain ATCC 204508 / S288c) (Baker's yeast).